Consider the following 94-residue polypeptide: Aspartyl/glutamyl-tRNA(Asn/Gln) amidotransferase subunit C (94 aa).

It belongs to the GatC family. As to quaternary structure, heterotrimer of A, B and C subunits.

The catalysed reaction is L-glutamyl-tRNA(Gln) + L-glutamine + ATP + H2O = L-glutaminyl-tRNA(Gln) + L-glutamate + ADP + phosphate + H(+). It carries out the reaction L-aspartyl-tRNA(Asn) + L-glutamine + ATP + H2O = L-asparaginyl-tRNA(Asn) + L-glutamate + ADP + phosphate + 2 H(+). Its function is as follows. Allows the formation of correctly charged Asn-tRNA(Asn) or Gln-tRNA(Gln) through the transamidation of misacylated Asp-tRNA(Asn) or Glu-tRNA(Gln) in organisms which lack either or both of asparaginyl-tRNA or glutaminyl-tRNA synthetases. The reaction takes place in the presence of glutamine and ATP through an activated phospho-Asp-tRNA(Asn) or phospho-Glu-tRNA(Gln). In Campylobacter jejuni subsp. doylei (strain ATCC BAA-1458 / RM4099 / 269.97), this protein is Aspartyl/glutamyl-tRNA(Asn/Gln) amidotransferase subunit C.